The chain runs to 197 residues: ATP-dependent Clp protease proteolytic subunit 1 (197 aa).

The Nucleophile role is filled by serine 100. Residue histidine 125 is part of the active site.

It belongs to the peptidase S14 family. As to quaternary structure, fourteen ClpP subunits assemble into 2 heptameric rings which stack back to back to give a disk-like structure with a central cavity, resembling the structure of eukaryotic proteasomes.

The protein localises to the cytoplasm. It catalyses the reaction Hydrolysis of proteins to small peptides in the presence of ATP and magnesium. alpha-casein is the usual test substrate. In the absence of ATP, only oligopeptides shorter than five residues are hydrolyzed (such as succinyl-Leu-Tyr-|-NHMec, and Leu-Tyr-Leu-|-Tyr-Trp, in which cleavage of the -Tyr-|-Leu- and -Tyr-|-Trp bonds also occurs).. In terms of biological role, cleaves peptides in various proteins in a process that requires ATP hydrolysis. Has a chymotrypsin-like activity. Plays a major role in the degradation of misfolded proteins. This Gloeobacter violaceus (strain ATCC 29082 / PCC 7421) protein is ATP-dependent Clp protease proteolytic subunit 1.